The following is a 480-amino-acid chain: Probable cobyric acid synthase (480 aa).

A GATase cobBQ-type domain is found at 246–431 (PVRIAVIRLP…MHGLFLNPSA (186 aa)). Cysteine 325 functions as the Nucleophile in the catalytic mechanism. Histidine 423 is a catalytic residue.

The protein belongs to the CobB/CobQ family. CobQ subfamily.

It functions in the pathway cofactor biosynthesis; adenosylcobalamin biosynthesis. Catalyzes amidations at positions B, D, E, and G on adenosylcobyrinic A,C-diamide. NH(2) groups are provided by glutamine, and one molecule of ATP is hydrogenolyzed for each amidation. The protein is Probable cobyric acid synthase of Methanoregula boonei (strain DSM 21154 / JCM 14090 / 6A8).